The sequence spans 280 residues: Phosphatidylglycerol--prolipoprotein diacylglyceryl transferase (280 aa).

The next 4 membrane-spanning stretches (helical) occupy residues 30–50, 71–91, 106–126, and 132–152; these read WYGLAYVVGILLGWFYARRIV, FLLWAAGGIVLGGRIGYILFY, IWNGGMSFHGGLVGTTLAMII, and AIPIWSLFDVVAAVVPIGLFF. Position 154 (Arg154) interacts with a 1,2-diacyl-sn-glycero-3-phospho-(1'-sn-glycerol). 3 consecutive transmembrane segments (helical) span residues 188 to 208, 217 to 237, and 251 to 271; these read QLYEAALEGLVLLAVLAWFVY, GLVTGIFVCGYAASRIFVEFF, and WLTMGMVLSVPMALIGIWAIA.

This sequence belongs to the Lgt family.

It is found in the cell inner membrane. The catalysed reaction is L-cysteinyl-[prolipoprotein] + a 1,2-diacyl-sn-glycero-3-phospho-(1'-sn-glycerol) = an S-1,2-diacyl-sn-glyceryl-L-cysteinyl-[prolipoprotein] + sn-glycerol 1-phosphate + H(+). The protein operates within protein modification; lipoprotein biosynthesis (diacylglyceryl transfer). Catalyzes the transfer of the diacylglyceryl group from phosphatidylglycerol to the sulfhydryl group of the N-terminal cysteine of a prolipoprotein, the first step in the formation of mature lipoproteins. The protein is Phosphatidylglycerol--prolipoprotein diacylglyceryl transferase of Sinorhizobium medicae (strain WSM419) (Ensifer medicae).